We begin with the raw amino-acid sequence, 132 residues long: Acyl-CoA thioester hydrolase YciA (132 aa).

One can recognise a HotDog ACOT-type domain in the interval 8–123 (PQGDLVLRTL…LFKYVAVDPE (116 aa)).

Belongs to the acyl coenzyme A hydrolase family.

Functionally, catalyzes the hydrolysis of the thioester bond in palmitoyl-CoA and malonyl-CoA. This chain is Acyl-CoA thioester hydrolase YciA (yciA), found in Escherichia coli O6:H1 (strain CFT073 / ATCC 700928 / UPEC).